We begin with the raw amino-acid sequence, 258 residues long: MAKRLDLTDVNIYYGSFHAVADVSLAILPRSVTALIGPSGCGKTTVLRTLNRMHEVIPGARVEGAVLLDDQDIYAPGIDPVGVRRAIGMVFQRPNPFPAMSIRNNVVAGLKLQGVRNRKVLDDTAESSLRGANLWDEVKDRLDKPGGGLSGGQQQRLCIARAIAVQPDVLLMDEPCSSLDPISTMAIEDLISELKQQYTIVIVTHNMQQAARVSDQTAFFNLEAVGKPGRLVEIASTEKIFSNPNQKATEDYISGRFG.

Residues 5-247 enclose the ABC transporter domain; sequence LDLTDVNIYY…EKIFSNPNQK (243 aa). 37–44 is a binding site for ATP; it reads GPSGCGKT.

It belongs to the ABC transporter superfamily. Phosphate importer (TC 3.A.1.7) family. As to quaternary structure, the complex is composed of two ATP-binding proteins (PstB), two transmembrane proteins (PstC and PstA) and a solute-binding protein (PstS).

Its subcellular location is the cell membrane. It catalyses the reaction phosphate(out) + ATP + H2O = ADP + 2 phosphate(in) + H(+). Functionally, part of the ABC transporter complex PstSACB involved in phosphate import. Responsible for energy coupling to the transport system. The polypeptide is Phosphate import ATP-binding protein PstB 1 (Mycobacterium bovis (strain ATCC BAA-935 / AF2122/97)).